The following is a 116-amino-acid chain: Mercuric transport protein MerT (116 aa).

2 helical membrane-spanning segments follow: residues Leu16–Phe36 and Val46–Trp66. Residues Cys24 and Cys25 each contribute to the Hg(2+) site. Hg(2+)-binding residues include Cys76 and Cys82. Residues Ile94–Phe114 traverse the membrane as a helical segment.

It belongs to the MerT family.

It is found in the cell inner membrane. Functionally, involved in mercury resistance. Probably transfers a mercuric ion from the periplasmic Hg(2+)-binding protein MerP to the cytoplasmic mercuric reductase MerA. This chain is Mercuric transport protein MerT, found in Acinetobacter calcoaceticus.